The primary structure comprises 415 residues: MGCMSSKLVPEGPSGNQAVVEVFNNERNKEYNRQNPHQNRGPRDPTKDPKNAGPPPEGQRSNRKVKKYRDKFDPRVTAKYDIKALIGRGNFSKVVRVEHRVTKQPYAIKMIDRVQGKEVFESEVAVLRRVKHSYIIQLIEVFETKDKVYMVMELATGGELFDRIIAKGSFTERDATRVLNMVLDGVKYLHGLGITHRDLKPENLLYYHPGHDSKIMITDFGLSSTRKGPENFMRTTCGTPEYIAPEIIARKPYMCQVDMWAVGVITYILLSGTMPFDDENKTRLYRLILKAKYSYAGEHWKDVSAQAKDFIDKLLVVSPGDRLSAADALKHQWLISNAASSSNKNLHRTISQNLIHRQSTRANSTKSAKSTRSTKSNKSNRSGRSLRSEHRRVMPDEIDELHRDPDVQADLASLG.

Residues 1–70 (MGCMSSKLVP…SNRKVKKYRD (70 aa)) form a disordered region. The span at 41-50 (GPRDPTKDPK) shows a compositional bias: basic and acidic residues. The region spanning 80–334 (YDIKALIGRG…AADALKHQWL (255 aa)) is the Protein kinase domain. ATP is bound by residues 86-94 (IGRGNFSKV) and lysine 109. Residue aspartate 198 is the Proton acceptor of the active site. A compositionally biased stretch (polar residues) spans 353-362 (NLIHRQSTRA). Residues 353-415 (NLIHRQSTRA…DVQADLASLG (63 aa)) form a disordered region. The segment covering 363-385 (NSTKSAKSTRSTKSNKSNRSGRS) has biased composition (low complexity). Over residues 386 to 406 (LRSEHRRVMPDEIDELHRDPD) the composition is skewed to basic and acidic residues.

The protein belongs to the protein kinase superfamily. CAMK Ser/Thr protein kinase family.

It catalyses the reaction L-seryl-[protein] + ATP = O-phospho-L-seryl-[protein] + ADP + H(+). It carries out the reaction L-threonyl-[protein] + ATP = O-phospho-L-threonyl-[protein] + ADP + H(+). In Pinctada fucata (Akoya pearl oyster), this protein is Serine/threonine-protein kinase H1 homolog (PSKH1).